A 314-amino-acid polypeptide reads, in one-letter code: Endo-beta-N-acetylglucosaminidase (314 aa).

Residues 1–47 (MQFGIVAAIADGGRTARAGGSVRPPRRPPASHTAWGLPRGRPTGQPH) form the signal peptide. The disordered stretch occupies residues 14–54 (RTARAGGSVRPPRRPPASHTAWGLPRGRPTGQPHATPTKSG). One can recognise a GH18 domain in the interval 55–309 (PTSIAYVEVN…SSMTKVLYGQ (255 aa)). Glu175 (proton donor) is an active-site residue.

It belongs to the glycosyl hydrolase 18 family. In terms of assembly, monomer.

It localises to the secreted. The catalysed reaction is an N(4)-(oligosaccharide-(1-&gt;3)-[oligosaccharide-(1-&gt;6)]-beta-D-Man-(1-&gt;4)-beta-D-GlcNAc-(1-&gt;4)-alpha-D-GlcNAc)-L-asparaginyl-[protein] + H2O = an oligosaccharide-(1-&gt;3)-[oligosaccharide-(1-&gt;6)]-beta-D-Man-(1-&gt;4)-D-GlcNAc + N(4)-(N-acetyl-beta-D-glucosaminyl)-L-asparaginyl-[protein]. Cleaves asparagine-linked oligomannose and hybrid, but not complex, oligosaccharides from glycoproteins. This is Endo-beta-N-acetylglucosaminidase from Flavobacterium sp. (strain SK1022).